The following is a 427-amino-acid chain: UBX domain-containing protein 10 (427 aa).

A coiled-coil region spans residues 247–311 (LERFRSEREA…VQKKKKQYRA (65 aa)). A UBX domain is found at 323–425 (SEDEPARLSI…FPNGTVVVEL (103 aa)).

It is found in the endoplasmic reticulum. In terms of biological role, involved in protein degradation through the ubiquitin/proteasome pathway. This chain is UBX domain-containing protein 10 (ucp10), found in Schizosaccharomyces pombe (strain 972 / ATCC 24843) (Fission yeast).